The chain runs to 764 residues: uncharacterized protein (764 aa).

This is an uncharacterized protein from Acanthamoeba polyphaga (Amoeba).